The primary structure comprises 145 residues: uncharacterized protein (145 aa).

Residues 16–36 form a helical membrane-spanning segment; the sequence is VLAYLLQLSASLVLPVAIWLI.

The protein resides in the mitochondrion membrane. This is an uncharacterized protein from Arabidopsis thaliana (Mouse-ear cress).